Consider the following 264-residue polypeptide: Phosphonoacetaldehyde hydrolase (264 aa).

Aspartate 9 acts as the Nucleophile in catalysis. Residues aspartate 9 and alanine 11 each contribute to the Mg(2+) site. Residue lysine 50 is the Schiff-base intermediate with substrate of the active site. Aspartate 183 contacts Mg(2+).

It belongs to the HAD-like hydrolase superfamily. PhnX family. In terms of assembly, homodimer. It depends on Mg(2+) as a cofactor.

The catalysed reaction is phosphonoacetaldehyde + H2O = acetaldehyde + phosphate + H(+). Its function is as follows. Involved in phosphonate degradation. The protein is Phosphonoacetaldehyde hydrolase of Bacillus cereus (strain G9842).